The chain runs to 171 residues: Disulfide bond formation protein B (171 aa).

The Cytoplasmic portion of the chain corresponds to 1 to 8 (MRLSYRLV). The chain crosses the membrane as a helical span at residues 9 to 25 (SGLLVLASIVGMSFALY). Residues 26 to 43 (LEHVKGLEPCPLCIFQRV) are Periplasmic-facing. Cys35 and Cys38 are disulfide-bonded. Residues 44–60 (GLMAMGFVALIAFLHNP) form a helical membrane-spanning segment. Residues 61-67 (VSNAIKR) lie on the Cytoplasmic side of the membrane. The helical transmembrane segment at 68–85 (FYAFLAGVAILWSVGVAG) threads the bilayer. Topologically, residues 86–142 (RHVWLQHLPPDQVPSCGPGLNYLIDALPMKTVLQEVLSGSGECAAIDWTFLGQSLPV) are periplasmic. A disulfide bond links Cys101 and Cys128. A helical transmembrane segment spans residues 143–161 (WSLAYFLLLLLVCLWQLFR). Residues 162 to 171 (FYPVFKTAKK) are Cytoplasmic-facing.

The protein belongs to the DsbB family.

The protein resides in the cell inner membrane. Its function is as follows. Required for disulfide bond formation in some periplasmic proteins. Acts by oxidizing the DsbA protein. The polypeptide is Disulfide bond formation protein B (Acinetobacter baumannii (strain ATCC 17978 / DSM 105126 / CIP 53.77 / LMG 1025 / NCDC KC755 / 5377)).